We begin with the raw amino-acid sequence, 156 residues long: S-ribosylhomocysteine lyase (156 aa).

Residues His-56, His-60, and Cys-123 each coordinate Fe cation.

Belongs to the LuxS family. In terms of assembly, homodimer. Fe cation serves as cofactor.

The catalysed reaction is S-(5-deoxy-D-ribos-5-yl)-L-homocysteine = (S)-4,5-dihydroxypentane-2,3-dione + L-homocysteine. Its function is as follows. Involved in the synthesis of autoinducer 2 (AI-2) which is secreted by bacteria and is used to communicate both the cell density and the metabolic potential of the environment. The regulation of gene expression in response to changes in cell density is called quorum sensing. Catalyzes the transformation of S-ribosylhomocysteine (RHC) to homocysteine (HC) and 4,5-dihydroxy-2,3-pentadione (DPD). The polypeptide is S-ribosylhomocysteine lyase (Staphylococcus aureus (strain Mu3 / ATCC 700698)).